The following is a 335-amino-acid chain: Deoxyhypusine hydroxylase (335 aa).

5 HEAT-like PBS-type repeats span residues 74-100, 107-133, 203-233, 241-267, and 274-301; these read LKHE…VLED, CRHE…LRDD, KRYR…LAEG, FRHE…TLSD, and VRHE…FVND. Fe cation-binding residues include H76, E77, H109, and E110. H243, E244, H276, and E277 together coordinate Fe cation.

Belongs to the deoxyhypusine hydroxylase family. Fe(2+) serves as cofactor.

Its subcellular location is the cytoplasm. It localises to the nucleus. The catalysed reaction is [eIF5A protein]-deoxyhypusine + AH2 + O2 = [eIF5A protein]-hypusine + A + H2O. It functions in the pathway protein modification; eIF5A hypusination. In terms of biological role, catalyzes the hydroxylation of the N(6)-(4-aminobutyl)-L-lysine intermediate to form hypusine, an essential post-translational modification only found in mature eIF-5A factor. The polypeptide is Deoxyhypusine hydroxylase (Coccidioides immitis (strain RS) (Valley fever fungus)).